A 115-amino-acid chain; its full sequence is MRVGCDIIAISRIEKIHSRHGKNFLDKFLSPKEQILIKNPATLAGLWAAKEAASKALGVGICELCSFFDIEISKDEKNAPKLKYSQKITKDFNITQTSLSISHDNGFAIAIVAVV.

Mg(2+) is bound by residues D6 and E51.

The protein belongs to the P-Pant transferase superfamily. AcpS family. It depends on Mg(2+) as a cofactor.

It is found in the cytoplasm. The catalysed reaction is apo-[ACP] + CoA = holo-[ACP] + adenosine 3',5'-bisphosphate + H(+). In terms of biological role, transfers the 4'-phosphopantetheine moiety from coenzyme A to a Ser of acyl-carrier-protein. This chain is Holo-[acyl-carrier-protein] synthase, found in Campylobacter jejuni (strain RM1221).